The chain runs to 170 residues: Ureidoglycolate lyase (170 aa).

Belongs to the ureidoglycolate lyase family. As to quaternary structure, homodimer. Requires Ni(2+) as cofactor.

It catalyses the reaction (S)-ureidoglycolate = urea + glyoxylate. The protein operates within nitrogen metabolism; (S)-allantoin degradation. Functionally, catalyzes the catabolism of the allantoin degradation intermediate (S)-ureidoglycolate, generating urea and glyoxylate. Involved in the utilization of allantoin as nitrogen source. This is Ureidoglycolate lyase from Pseudomonas savastanoi pv. phaseolicola (strain 1448A / Race 6) (Pseudomonas syringae pv. phaseolicola (strain 1448A / Race 6)).